Here is a 64-residue protein sequence, read N- to C-terminus: Large ribosomal subunit protein bL35 (64 aa).

The protein belongs to the bacterial ribosomal protein bL35 family.

This Lactiplantibacillus plantarum (strain ATCC BAA-793 / NCIMB 8826 / WCFS1) (Lactobacillus plantarum) protein is Large ribosomal subunit protein bL35.